A 436-amino-acid polypeptide reads, in one-letter code: Histone acetyltransferase RTT109 (436 aa).

Positions 2–404 (SLNDFLSSVL…LQSLTGKREH (403 aa)) constitute a Rtt109-type HAT domain. Acetyl-CoA-binding positions include 88-90 (ADT) and 97-101 (RVSVR). Residues 128-170 (RSYKKISPELISAASTPARTLRILARRLKQSGSTVLKEIESPR) are interaction with VPS75. Acetyl-CoA is bound by residues Phe192, Ala196, 211–213 (HIL), and Trp221. Asp288 functions as the Proton donor/acceptor in the catalytic mechanism. Lys290 carries the N6-acetyllysine; by autocatalysis modification. An interaction with ASF1 region spans residues 419-433 (LAITMLKPRKKAKAL).

This sequence belongs to the RTT109 family. As to quaternary structure, forms a complex composed of two RTT109 subunits and one VPS75 homodimer; each RTT109 subunit interacts predominantly with VPS75 instead of interacting with the other RTT109 subunit. Interacts with VPS75; the interaction is direct. Interacts (via C-terminus) with ASF1; the interaction is direct. Interacts with histone H3/H4 heterodimers via histone H3.

The protein resides in the nucleus. The enzyme catalyses L-lysyl-[histone] + acetyl-CoA = N(6)-acetyl-L-lysyl-[histone] + CoA + H(+). It carries out the reaction L-lysyl-[protein] + acetyl-CoA = N(6)-acetyl-L-lysyl-[protein] + CoA + H(+). Functionally, histone chaperone-dependent acetylase that modifies 'Lys-9', 'Lys-14', 'Lys-23', 'Lys-27', and 'Lys-56' on histone H3 (H3K9Ac, H3K14Ac and H3K23Ac, H3K27Ac, and H3K56Ac) to promote nucleosome assembly, genomic stability, DNA repair and transcriptional regulation during mitotic S-phase. Its residue selectivity is influenced by the acetylation status of histone H3, and also the presence of histone chaperone ASF1 that shifts selectivity to 'Lys-56' when H3K14Ac is already present. H3K56 acetylation weakens the interaction between the histone core and the surrounding DNA in the nucleosomal particle and drives chromatin disassembly. Autoacetylates. Independently of acetyltransferase activity, stimulates histone deposition by VPS75. Involved in regulation of Ty1 transposition. The chain is Histone acetyltransferase RTT109 from Saccharomyces cerevisiae (strain ATCC 204508 / S288c) (Baker's yeast).